The chain runs to 321 residues: MSKPIQMERGVKYRDADKMALIPVKTIVTEREELLRKPEWMKIKLPADSSKIQGIKAAMRKNGLHSVCEEASCPNLAECFNHGTATFMILGAICTRRCPFCDVAHGRPNAPDPQEPIKLAQTIKDMGLRYVVITSVDRDDLRDGGAQHFADCITAIREKNPNIRIETLVPDFRGRMDKALEILTDTPPDVFNHNLENVPRVYRQVRPGANYQWSLTLLERFKQAHPNIPTKSGLMVGLGETNEEIIDVMRDLRKHGVTMLTLGQYLQPSRHHLPVQRYVSPDEFEYMKEQALAMGFTHAACGPFVRSSYHADLQAQGIEVK.

[4Fe-4S] cluster contacts are provided by cysteine 68, cysteine 73, cysteine 79, cysteine 94, cysteine 98, cysteine 101, and serine 308. The 218-residue stretch at 80 to 297 (FNHGTATFMI…KEQALAMGFT (218 aa)) folds into the Radical SAM core domain.

Belongs to the radical SAM superfamily. Lipoyl synthase family. [4Fe-4S] cluster serves as cofactor.

It is found in the cytoplasm. It carries out the reaction [[Fe-S] cluster scaffold protein carrying a second [4Fe-4S](2+) cluster] + N(6)-octanoyl-L-lysyl-[protein] + 2 oxidized [2Fe-2S]-[ferredoxin] + 2 S-adenosyl-L-methionine + 4 H(+) = [[Fe-S] cluster scaffold protein] + N(6)-[(R)-dihydrolipoyl]-L-lysyl-[protein] + 4 Fe(3+) + 2 hydrogen sulfide + 2 5'-deoxyadenosine + 2 L-methionine + 2 reduced [2Fe-2S]-[ferredoxin]. It participates in protein modification; protein lipoylation via endogenous pathway; protein N(6)-(lipoyl)lysine from octanoyl-[acyl-carrier-protein]: step 2/2. In terms of biological role, catalyzes the radical-mediated insertion of two sulfur atoms into the C-6 and C-8 positions of the octanoyl moiety bound to the lipoyl domains of lipoate-dependent enzymes, thereby converting the octanoylated domains into lipoylated derivatives. This is Lipoyl synthase from Proteus mirabilis (strain HI4320).